Consider the following 126-residue polypeptide: Large ribosomal subunit protein uL22 (126 aa).

It belongs to the universal ribosomal protein uL22 family. As to quaternary structure, part of the 50S ribosomal subunit.

In terms of biological role, this protein binds specifically to 23S rRNA; its binding is stimulated by other ribosomal proteins, e.g. L4, L17, and L20. It is important during the early stages of 50S assembly. It makes multiple contacts with different domains of the 23S rRNA in the assembled 50S subunit and ribosome. Functionally, the globular domain of the protein is located near the polypeptide exit tunnel on the outside of the subunit, while an extended beta-hairpin is found that lines the wall of the exit tunnel in the center of the 70S ribosome. This Ruegeria sp. (strain TM1040) (Silicibacter sp.) protein is Large ribosomal subunit protein uL22.